The chain runs to 1435 residues: Putative ATP-dependent RNA helicase YLR419W (1435 aa).

Disordered regions lie at residues 1-57 (MAKK…STAS) and 226-251 (LSSH…KNSH). S9 is subject to Phosphoserine. Residues 31–43 (KGQEPEPEDDKRA) are compositionally biased toward basic and acidic residues. Residues 45–57 (QQSNRAKVTSTAS) are compositionally biased toward polar residues. The UBA domain occupies 365 to 406 (PLSTRMIVERLTEIGVSSDEALLALQQNDMNENEAAGFLTRE). The 102-residue stretch at 430 to 531 (QELESLESIY…EWLKENISKI (102 aa)) folds into the RWD domain. The interval 543 to 566 (DSKGAINKRNISNGKRSINNSSSR) is disordered. Polar residues predominate over residues 551–566 (RNISNGKRSINNSSSR). A Helicase ATP-binding domain is found at 614-782 (IDIINKNEVV…FPGLATCHIE (169 aa)). 627–634 (GETGSGKS) contacts ATP. The short motif at 729-732 (DEVH) is the DEAH box element. S816 carries the phosphoserine modification. A Helicase C-terminal domain is found at 845-1020 (LLCQVVEYVH…SLYLSVKAMG (176 aa)).

This sequence belongs to the DEAD box helicase family. DEAH subfamily.

Its subcellular location is the cytoplasm. It catalyses the reaction ATP + H2O = ADP + phosphate + H(+). In terms of biological role, probable ATP-binding RNA helicase. This is Putative ATP-dependent RNA helicase YLR419W from Saccharomyces cerevisiae (strain ATCC 204508 / S288c) (Baker's yeast).